A 184-amino-acid polypeptide reads, in one-letter code: MNWRSERIWIELITGSRKISNFCWACILFLGSLGFLLVGTSSYLGRNLISLFPSQQIIFFPQGIVMSFYGIAGLFISSYLWCTISWNVGSGYDRFDRKEGVVCIFRWGFPGINRRIFLRFLMRDIQSIRMEVKEGLYSRRVLYMEIRGQGAIPLTRTDENLTPREIEQKAAESAYFLRVPIEVF.

The next 2 membrane-spanning stretches (helical) occupy residues 19 to 39 and 57 to 77; these read ISNF…LLVG and IIFF…LFIS.

Belongs to the Ycf4 family.

It is found in the plastid. It localises to the chloroplast thylakoid membrane. Its function is as follows. Seems to be required for the assembly of the photosystem I complex. In Drimys granadensis, this protein is Photosystem I assembly protein Ycf4.